The chain runs to 193 residues: Non-canonical purine NTP pyrophosphatase homolog (193 aa).

The protein belongs to the HAM1 NTPase family.

The protein is Non-canonical purine NTP pyrophosphatase homolog of Halalkalibacterium halodurans (strain ATCC BAA-125 / DSM 18197 / FERM 7344 / JCM 9153 / C-125) (Bacillus halodurans).